We begin with the raw amino-acid sequence, 101 residues long: uncharacterized protein (101 aa).

The N-terminal stretch at 1–24 (MILMFRMNKGMSFITLLFSLALFS) is a signal peptide.

This is an uncharacterized protein from Haemophilus influenzae (strain ATCC 51907 / DSM 11121 / KW20 / Rd).